Here is a 618-residue protein sequence, read N- to C-terminus: Dihydroxy-acid dehydratase (618 aa).

D81 is a Mg(2+) binding site. A [2Fe-2S] cluster-binding site is contributed by C122. D123 and K124 together coordinate Mg(2+). K124 is subject to N6-carboxylysine. Residue C195 coordinates [2Fe-2S] cluster. E491 is a binding site for Mg(2+). S517 serves as the catalytic Proton acceptor.

This sequence belongs to the IlvD/Edd family. Homodimer. It depends on [2Fe-2S] cluster as a cofactor. Mg(2+) is required as a cofactor.

It catalyses the reaction (2R)-2,3-dihydroxy-3-methylbutanoate = 3-methyl-2-oxobutanoate + H2O. The catalysed reaction is (2R,3R)-2,3-dihydroxy-3-methylpentanoate = (S)-3-methyl-2-oxopentanoate + H2O. It participates in amino-acid biosynthesis; L-isoleucine biosynthesis; L-isoleucine from 2-oxobutanoate: step 3/4. Its pathway is amino-acid biosynthesis; L-valine biosynthesis; L-valine from pyruvate: step 3/4. Its function is as follows. Functions in the biosynthesis of branched-chain amino acids. Catalyzes the dehydration of (2R,3R)-2,3-dihydroxy-3-methylpentanoate (2,3-dihydroxy-3-methylvalerate) into 2-oxo-3-methylpentanoate (2-oxo-3-methylvalerate) and of (2R)-2,3-dihydroxy-3-methylbutanoate (2,3-dihydroxyisovalerate) into 2-oxo-3-methylbutanoate (2-oxoisovalerate), the penultimate precursor to L-isoleucine and L-valine, respectively. In Dechloromonas aromatica (strain RCB), this protein is Dihydroxy-acid dehydratase.